The primary structure comprises 1199 residues: Ecdysone-induced protein 75B, isoforms C/D (1199 aa).

The disordered stretch occupies residues 130–182; the sequence is TTDGPTAVLQQQQPQQQMPQHFESLPHHHPQQEHQPQQQQQQHHLQHHPHPHV. 2 stretches are compositionally biased toward low complexity: residues 139–149 and 162–172; these read QQQQPQQQMPQ and EHQPQQQQQQH. The segment at residues 242-318 is a DNA-binding region (nuclear receptor); it reads TVLCRVCGDK…VGMSRDAVRF (77 aa). NR C4-type zinc fingers lie at residues 245–265 and 282–306; these read CRVC…CEGC and CTKN…LKKC. The 249-residue stretch at 352–600 folds into the NR LBD domain; that stretch reads DQPRLLAAVL…QQMWSMEDGN (249 aa). 6 disordered regions span residues 624–665, 771–808, 831–851, 895–961, 991–1104, and 1155–1188; these read KSPL…SALA, LDSP…SVDD, VSVS…KRQI, AEAD…SSHS, ENST…SNSA, and VTVT…NPGL. 5 stretches are compositionally biased toward low complexity: residues 641–653, 792–804, 831–845, 897–942, and 950–961; these read GSPS…GVSL, SSGG…SPRS, VSVS…STSS, ADAS…AQSQ, and SSPKASMASSHS. Composition is skewed to polar residues over residues 993–1006 and 1018–1040; these read STAA…VGNR and AVQN…QRQQ. Low complexity-rich tracts occupy residues 1041-1077, 1086-1104, and 1159-1187; these read SVSP…SASS, STSN…SNSA, and ASNG…PNPG.

The protein belongs to the nuclear hormone receptor family. NR1 subfamily.

It is found in the nucleus. Its function is as follows. Implicated in the regulation of ecdysone-triggered gene hierarchies. Probably plays a key role in mediating the regulation of the larval molt by 20-OH-ecdysone. The protein is Ecdysone-induced protein 75B, isoforms C/D (Eip75B) of Drosophila melanogaster (Fruit fly).